The sequence spans 261 residues: Chanoclavine-I dehydrogenase easD (261 aa).

NADP(+)-binding residues include Ile18, Lys48, Asp66, Arg132, Tyr166, Lys170, and Thr201. Tyr166 serves as the catalytic Proton donor. Catalysis depends on Lys170, which acts as the Lowers pKa of active site Tyr.

This sequence belongs to the short-chain dehydrogenases/reductases (SDR) family.

It catalyses the reaction chanoclavine-I + NAD(+) = chanoclavine-I aldehyde + NADH + H(+). Its pathway is alkaloid biosynthesis; ergot alkaloid biosynthesis. Functionally, chanoclavine-I dehydrogenase; part of the gene cluster that mediates the biosynthesis of fumiclavanine C, a fungal ergot alkaloid. DmaW catalyzes the first step of ergot alkaloid biosynthesis by condensing dimethylallyl diphosphate (DMAP) and tryptophan to form 4-dimethylallyl-L-tryptophan. The second step is catalyzed by the methyltransferase easF that methylates 4-dimethylallyl-L-tryptophan in the presence of S-adenosyl-L-methionine, resulting in the formation of 4-dimethylallyl-L-abrine. The catalase easC and the FAD-dependent oxidoreductase easE then transform 4-dimethylallyl-L-abrine to chanoclavine-I which is further oxidized by EasD in the presence of NAD(+), resulting in the formation of chanoclavine-I aldehyde. EasA reduces chanoclavine-I aldehyde to dihydrochanoclavine-I aldehyde that spontaneously dehydrates to form 6,8-dimethyl-6,7-didehydroergoline. EasG then catalyzes the reduction of 6,8-dimethyl-6,7-didehydroergoline to form festuclavine. Hydrolysis of festuclavine by easM then leads to the formation of fumigaclavine B which is in turn acetylated by easN to fumigaclavine A. Finally, easL catalyzes the conversion of fumigaclavine A into fumigaclavine C by attaching a dimethylallyl moiety to C-2 of the indole nucleus. This Aspergillus fumigatus (strain ATCC MYA-4609 / CBS 101355 / FGSC A1100 / Af293) (Neosartorya fumigata) protein is Chanoclavine-I dehydrogenase easD.